The chain runs to 707 residues: Choline transporter-like protein 4 (707 aa).

Over 1 to 32 (MGEKQDPDKAYGKPAKYDPSFRGPIRNRSCTD) the chain is Cytoplasmic. The chain crosses the membrane as a helical span at residues 33–53 (IICCVLFFVFILGYIAVGLVA). Topologically, residues 54-226 (WVYGDPQQVL…KIFEDFAQSW (173 aa)) are extracellular. 4 N-linked (GlcNAc...) asparagine glycosylation sites follow: Asn67, Asn142, Asn184, and Asn195. Residues 227 to 247 (YWILAALGVALVLSLLFVLLL) form a helical membrane-spanning segment. Over 248-249 (RL) the chain is Cytoplasmic. The chain crosses the membrane as a helical span at residues 250–270 (VAGPLVFVLIIGVLGVLAYGI). Topologically, residues 271-306 (YHCWNEYRLLRDKGASISQLGFTTNLSAYSSVQETW) are extracellular. N-linked (GlcNAc...) asparagine glycosylation is present at Asn295. A helical membrane pass occupies residues 307-327 (LAALILLAVLEGILLLMLIFL). At 328–355 (RQRIRIAIALLEEASRAVGQMMSTLFYP) the chain is on the cytoplasmic side. Residues 356–376 (LVTFVLLLVCIAYWAMTALYL) traverse the membrane as a helical segment. Over 377–452 (ATSGQPQYVL…GVLGLFWTIN (76 aa)) the chain is Extracellular. Asn390, Asn402, and Asn413 each carry an N-linked (GlcNAc...) asparagine glycan. The helical transmembrane segment at 453-473 (WVLALGQCVLAGAFASFYWAF) threads the bilayer. At 474–498 (HKPRDIPTFPLSSAFIRTLRYHTGS) the chain is on the cytoplasmic side. Residues 499–519 (LAFGALILTLVQIARAILEYI) form a helical membrane-spanning segment. The Extracellular portion of the chain corresponds to 520–557 (DHKLRGAQNPVARCIMCCFKCCLWCLEKFIKFLNRNAY). A helical transmembrane segment spans residues 558–578 (IMIAIYGKNFCVSAKNAFMLL). The Cytoplasmic portion of the chain corresponds to 579-594 (MRNIVRVVVLDKVTDL). A helical transmembrane segment spans residues 595 to 615 (LLFFGKLLVVGGVGVLSFFFF). Over 616-635 (TGRIQGLGKDFESPQLNYYW) the chain is Extracellular. Residues 636–656 (LPIMTSIMGAYVIASGFFSVF) form a helical membrane-spanning segment. Residues 657 to 707 (GMCVDTLFLCFLEDLERNDGSLDRPYYMSKALLKILGKKNEVPSGDKKRKK) are Cytoplasmic-facing.

Belongs to the CTL (choline transporter-like) family. N-glycosylated; N-glycosylation of Asn-677 and Asn-390 is required for a proper thiamine pyrophosphate uptake.

The protein localises to the membrane. It localises to the apical cell membrane. It carries out the reaction choline(out) + n H(+)(in) = choline(in) + n H(+)(out). The enzyme catalyses thiamine diphosphate(out) = thiamine diphosphate(in). Choline transporter that plays a role in the choline-acetylcholine system and is required to the efferent innervation of hair cells in the olivocochlear bundle for the maintenance of physiological function of outer hair cells and the protection of hair cells from acoustic injury. Also described as a thiamine pyrophosphate transporter in colon, may mediate the absorption of microbiota-generated thiamine pyrophosphate and contribute to host thiamine (vitamin B1) homeostasis. The chain is Choline transporter-like protein 4 from Sus scrofa (Pig).